Consider the following 226-residue polypeptide: uncharacterized protein (226 aa).

4 helical membrane passes run 25–45, 54–74, 107–127, and 153–173; these read ALAW…IFLI, FLLF…YFIF, ELFL…YFFI, and TITI…CFSS.

The protein resides in the cell membrane. This is an uncharacterized protein from Mycoplasma genitalium (strain ATCC 33530 / DSM 19775 / NCTC 10195 / G37) (Mycoplasmoides genitalium).